The primary structure comprises 290 residues: Putative speedy protein-like protein 3 (290 aa).

The interval 16-50 (GVDPSPPCRSLGWKRKKEWSDESEEEPEKELAPEP) is disordered. The segment covering 36-50 (DESEEEPEKELAPEP) has biased composition (acidic residues).

This sequence belongs to the Speedy/Ringo family.

This Homo sapiens (Human) protein is Putative speedy protein-like protein 3.